The following is a 222-amino-acid chain: NADH dehydrogenase [ubiquinone] iron-sulfur protein 8-B, mitochondrial (222 aa).

4Fe-4S ferredoxin-type domains lie at 114-143 and 153-182; these read RRYPTGEERCIACKLCEAVCPAQAITIEAE and TRYDIDMTKCIYCGFCQEACPVDAIVEGPN. Residues Cys123, Cys126, Cys129, Cys133, Cys162, Cys165, Cys168, and Cys172 each contribute to the [4Fe-4S] cluster site.

This sequence belongs to the complex I 23 kDa subunit family. Complex I is composed of at least 49 different subunits. This is a component of the iron-sulfur (IP) fragment of the enzyme. The cofactor is [4Fe-4S] cluster.

The protein resides in the mitochondrion. It catalyses the reaction a ubiquinone + NADH + 5 H(+)(in) = a ubiquinol + NAD(+) + 4 H(+)(out). Functionally, core subunit of the mitochondrial membrane respiratory chain NADH dehydrogenase (Complex I) that is believed to belong to the minimal assembly required for catalysis. Complex I functions in the transfer of electrons from NADH to the respiratory chain. The immediate electron acceptor for the enzyme is believed to be ubiquinone. May donate electrons to ubiquinone. The protein is NADH dehydrogenase [ubiquinone] iron-sulfur protein 8-B, mitochondrial of Arabidopsis thaliana (Mouse-ear cress).